A 363-amino-acid polypeptide reads, in one-letter code: Carbamoyl phosphate synthase small chain (363 aa).

2 CPSase regions span residues 1–168 (MTKR…ASPG) and 1–172 (MTKR…DGKR). The L-glutamine site is built by serine 46, glycine 220, and glycine 222. One can recognise a Glutamine amidotransferase type-1 domain in the interval 172–359 (RVVLVDYGVK…MEMMNVKEEG (188 aa)). The Nucleophile role is filled by cysteine 247. L-glutamine is bound by residues leucine 248, glutamine 251, asparagine 289, glycine 291, and tyrosine 292. Residues histidine 332 and glutamate 334 contribute to the active site.

Belongs to the CarA family. In terms of assembly, composed of two chains; the small (or glutamine) chain promotes the hydrolysis of glutamine to ammonia, which is used by the large (or ammonia) chain to synthesize carbamoyl phosphate. Tetramer of heterodimers (alpha,beta)4.

It catalyses the reaction hydrogencarbonate + L-glutamine + 2 ATP + H2O = carbamoyl phosphate + L-glutamate + 2 ADP + phosphate + 2 H(+). It carries out the reaction L-glutamine + H2O = L-glutamate + NH4(+). It participates in amino-acid biosynthesis; L-arginine biosynthesis; carbamoyl phosphate from bicarbonate: step 1/1. It functions in the pathway pyrimidine metabolism; UMP biosynthesis via de novo pathway; (S)-dihydroorotate from bicarbonate: step 1/3. Its function is as follows. Small subunit of the glutamine-dependent carbamoyl phosphate synthetase (CPSase). CPSase catalyzes the formation of carbamoyl phosphate from the ammonia moiety of glutamine, carbonate, and phosphate donated by ATP, constituting the first step of 2 biosynthetic pathways, one leading to arginine and/or urea and the other to pyrimidine nucleotides. The small subunit (glutamine amidotransferase) binds and cleaves glutamine to supply the large subunit with the substrate ammonia. The protein is Carbamoyl phosphate synthase small chain of Listeria innocua serovar 6a (strain ATCC BAA-680 / CLIP 11262).